We begin with the raw amino-acid sequence, 394 residues long: GPI transamidase component GAB1 (394 aa).

The Cytoplasmic segment spans residues 1–135; sequence MDSTALKVAL…TLLSCISRSS (135 aa). Residues 136–156 form a helical membrane-spanning segment; sequence IIFTNFAISSSLYCILAEGNV. Topologically, residues 157-160 are lumenal; it reads LLSS. The chain crosses the membrane as a helical span at residues 161–181; it reads VMISISGYLSVYPILLLIPLL. The Cytoplasmic portion of the chain corresponds to 182–190; sequence GMLKSWRQR. A helical membrane pass occupies residues 191–211; the sequence is ILSAIVSILSLLILLLFSYSI. The Lumenal portion of the chain corresponds to 212–224; that stretch reads LGSQSWSFLTQVY. The chain crosses the membrane as a helical span at residues 225–245; that stretch reads GSIITFEKVFPNLGLWWYFFI. Residues 235–255 form a may be involved in recognition of long-chain fatty acids in GPI region; it reads PNLGLWWYFFIEMFDTFIPFF. Residues 246–250 lie on the Cytoplasmic side of the membrane; sequence EMFDT. Residues 251–271 traverse the membrane as a helical segment; sequence FIPFFKAVFNIFIAVFITPFT. Over 272 to 297 the chain is Lumenal; sequence LRYHKQPFYAFILCIGWIVLTKPYPS. Residues 298 to 318 form a helical membrane-spanning segment; sequence LGDAGFFFSFLPFFTPLFGYL. The Cytoplasmic portion of the chain corresponds to 319-324; it reads RYPIIS. The helical transmembrane segment at 325–345 threads the bilayer; sequence ALLFLHAIVLAPIFYHLWVVL. The Lumenal portion of the chain corresponds to 346–351; the sequence is GSGNSN. The chain crosses the membrane as a helical span at residues 352–372; sequence FFYAISLVYALAIASILVDLN. Over 373 to 394 the chain is Cytoplasmic; the sequence is WAMLRIEYDNGIPNFKLKVTQI.

Belongs to the PIGU family. In terms of assembly, forms a complex with GPI16, GPI17, GPI8 and GAA1.

It localises to the endoplasmic reticulum membrane. The protein operates within glycolipid biosynthesis; glycosylphosphatidylinositol-anchor biosynthesis. In terms of biological role, component of the GPI transamidase complex. May be involved in the recognition of either the GPI attachment signal or the lipid portion of GPI. The chain is GPI transamidase component GAB1 (GAB1) from Saccharomyces cerevisiae (strain ATCC 204508 / S288c) (Baker's yeast).